Consider the following 338-residue polypeptide: Ketol-acid reductoisomerase (NADP(+)) (338 aa).

The KARI N-terminal Rossmann domain maps to 1–181; sequence MRVYYDKDCD…GGGRSGIIET (181 aa). NADP(+)-binding positions include 24-27, Arg47, Ser50, Ser52, and 82-85; these read YGSQ and DENQ. The active site involves His107. Gly133 provides a ligand contact to NADP(+). In terms of domain architecture, KARI C-terminal knotted spans 182–327; it reads TFKDETETDL…EKLRGMMPWI (146 aa). Positions 190, 194, 226, and 230 each coordinate Mg(2+). Ser251 is a binding site for substrate.

It belongs to the ketol-acid reductoisomerase family. Mg(2+) serves as cofactor.

It catalyses the reaction (2R)-2,3-dihydroxy-3-methylbutanoate + NADP(+) = (2S)-2-acetolactate + NADPH + H(+). It carries out the reaction (2R,3R)-2,3-dihydroxy-3-methylpentanoate + NADP(+) = (S)-2-ethyl-2-hydroxy-3-oxobutanoate + NADPH + H(+). Its pathway is amino-acid biosynthesis; L-isoleucine biosynthesis; L-isoleucine from 2-oxobutanoate: step 2/4. It functions in the pathway amino-acid biosynthesis; L-valine biosynthesis; L-valine from pyruvate: step 2/4. Functionally, involved in the biosynthesis of branched-chain amino acids (BCAA). Catalyzes an alkyl-migration followed by a ketol-acid reduction of (S)-2-acetolactate (S2AL) to yield (R)-2,3-dihydroxy-isovalerate. In the isomerase reaction, S2AL is rearranged via a Mg-dependent methyl migration to produce 3-hydroxy-3-methyl-2-ketobutyrate (HMKB). In the reductase reaction, this 2-ketoacid undergoes a metal-dependent reduction by NADPH to yield (R)-2,3-dihydroxy-isovalerate. The polypeptide is Ketol-acid reductoisomerase (NADP(+)) (Chromohalobacter salexigens (strain ATCC BAA-138 / DSM 3043 / CIP 106854 / NCIMB 13768 / 1H11)).